We begin with the raw amino-acid sequence, 354 residues long: Uroporphyrinogen decarboxylase (354 aa).

Substrate is bound by residues 27-31, aspartate 77, tyrosine 154, serine 209, and histidine 327; that span reads RQAGR.

It belongs to the uroporphyrinogen decarboxylase family. In terms of assembly, homodimer.

Its subcellular location is the cytoplasm. The catalysed reaction is uroporphyrinogen III + 4 H(+) = coproporphyrinogen III + 4 CO2. The protein operates within porphyrin-containing compound metabolism; protoporphyrin-IX biosynthesis; coproporphyrinogen-III from 5-aminolevulinate: step 4/4. Functionally, catalyzes the decarboxylation of four acetate groups of uroporphyrinogen-III to yield coproporphyrinogen-III. The protein is Uroporphyrinogen decarboxylase of Shewanella denitrificans (strain OS217 / ATCC BAA-1090 / DSM 15013).